A 296-amino-acid chain; its full sequence is Coatomer subunit epsilon (296 aa).

The protein belongs to the COPE family. In terms of assembly, oligomeric complex that consists of at least the alpha, beta, beta', gamma, delta, epsilon and zeta subunits. Interacts with the ESCRT-0 subunit VPS27.

Its subcellular location is the cytoplasm. The protein localises to the golgi apparatus membrane. It localises to the cytoplasmic vesicle. It is found in the COPI-coated vesicle membrane. The coatomer is a cytosolic protein complex that binds to dilysine motifs and reversibly associates with Golgi non-clathrin-coated vesicles, which further mediate biosynthetic protein transport from the ER, via the Golgi up to the trans Golgi network. The coatomer complex is required for budding from Golgi membranes, and is essential for the retrograde Golgi-to-ER transport of dilysine-tagged proteins. In Saccharomyces cerevisiae (strain ATCC 204508 / S288c) (Baker's yeast), this protein is Coatomer subunit epsilon (SEC28).